A 142-amino-acid chain; its full sequence is Large ribosomal subunit protein uL11 (142 aa).

This sequence belongs to the universal ribosomal protein uL11 family. In terms of assembly, part of the ribosomal stalk of the 50S ribosomal subunit. Interacts with L10 and the large rRNA to form the base of the stalk. L10 forms an elongated spine to which L12 dimers bind in a sequential fashion forming a multimeric L10(L12)X complex. One or more lysine residues are methylated.

In terms of biological role, forms part of the ribosomal stalk which helps the ribosome interact with GTP-bound translation factors. This Buchnera aphidicola subsp. Acyrthosiphon pisum (strain APS) (Acyrthosiphon pisum symbiotic bacterium) protein is Large ribosomal subunit protein uL11.